A 280-amino-acid chain; its full sequence is GTP-binding protein rhoC (280 aa).

Residues 13 to 59 (TSRRHSLVTPPPSVAPRQNRMRSQSVRVSNGTVSTDNSMSSGRVSEA) are disordered. A compositionally biased stretch (polar residues) spans 33 to 59 (MRSQSVRVSNGTVSTDNSMSSGRVSEA). 76-83 (GDGGCGKT) provides a ligand contact to GTP. The Effector region signature appears at 98–106 (YVPTVFENY). Residues 125–129 (DTAGQ) and 183–186 (LKSD) each bind GTP. Positions 251-275 (WDTRLPSSSGKPGGKPIGGKKIKKR) are disordered. C277 is subject to Cysteine methyl ester. C277 carries the S-geranylgeranyl cysteine lipid modification. Residues 278–280 (KIL) constitute a propeptide, removed in mature form.

Belongs to the small GTPase superfamily. Rho family.

Its subcellular location is the cell membrane. The chain is GTP-binding protein rhoC (rhoC) from Emericella nidulans (strain FGSC A4 / ATCC 38163 / CBS 112.46 / NRRL 194 / M139) (Aspergillus nidulans).